The following is a 208-amino-acid chain: V-type ATP synthase subunit D (208 aa).

Belongs to the V-ATPase D subunit family.

Functionally, produces ATP from ADP in the presence of a proton gradient across the membrane. The polypeptide is V-type ATP synthase subunit D (Chlamydia abortus (strain DSM 27085 / S26/3) (Chlamydophila abortus)).